Here is a 321-residue protein sequence, read N- to C-terminus: Protein translocase subunit SecF (321 aa).

6 helical membrane passes run Val-23–Thr-43, Leu-158–Ile-178, Leu-189–Ile-209, Leu-217–Phe-237, Phe-258–Ala-280, and Tyr-290–Pro-312.

This sequence belongs to the SecD/SecF family. SecF subfamily. In terms of assembly, forms a complex with SecD. Part of the essential Sec protein translocation apparatus which comprises SecA, SecYEG and auxiliary proteins SecDF. Other proteins may also be involved.

It is found in the cell inner membrane. Functionally, part of the Sec protein translocase complex. Interacts with the SecYEG preprotein conducting channel. SecDF uses the proton motive force (PMF) to complete protein translocation after the ATP-dependent function of SecA. In terms of biological role, probably participates in protein translocation into and across both the cytoplasmic and thylakoid membranes in cyanobacterial cells. This Prochlorococcus marinus (strain SARG / CCMP1375 / SS120) protein is Protein translocase subunit SecF.